Consider the following 464-residue polypeptide: ATP synthase subunit beta (464 aa).

Residue Gly-153–Thr-160 coordinates ATP.

It belongs to the ATPase alpha/beta chains family. In terms of assembly, F-type ATPases have 2 components, CF(1) - the catalytic core - and CF(0) - the membrane proton channel. CF(1) has five subunits: alpha(3), beta(3), gamma(1), delta(1), epsilon(1). CF(0) has three main subunits: a(1), b(2) and c(9-12). The alpha and beta chains form an alternating ring which encloses part of the gamma chain. CF(1) is attached to CF(0) by a central stalk formed by the gamma and epsilon chains, while a peripheral stalk is formed by the delta and b chains.

The protein resides in the cell membrane. The enzyme catalyses ATP + H2O + 4 H(+)(in) = ADP + phosphate + 5 H(+)(out). Produces ATP from ADP in the presence of a proton gradient across the membrane. The catalytic sites are hosted primarily by the beta subunits. The protein is ATP synthase subunit beta of Alkaliphilus oremlandii (strain OhILAs) (Clostridium oremlandii (strain OhILAs)).